A 616-amino-acid chain; its full sequence is Adenylosuccinate synthetase 1 (616 aa).

A disordered region spans residues 1 to 27 (MDKQAERGQSAGPVKTPQGTQPPAHNY). The span at 17 to 27 (PQGTQPPAHNY) shows a compositional bias: polar residues. Residues 87–93 (GDEGKGK) and 117–119 (GHT) contribute to the GTP site. D88 serves as the catalytic Proton acceptor. Mg(2+) is bound by residues D88 and G117. IMP contacts are provided by residues 88 to 91 (DEGK), 115 to 118 (NAGH), T202, K216, Q328, T343, and K472. Catalysis depends on H118, which acts as the Proton donor. Substrate is bound at residue 468–474 (AVTKKPR). GTP is bound by residues R474 and 603–605 (GNG).

This sequence belongs to the adenylosuccinate synthetase family. In terms of assembly, homodimer. Mg(2+) serves as cofactor.

Its subcellular location is the cytoplasm. It catalyses the reaction IMP + L-aspartate + GTP = N(6)-(1,2-dicarboxyethyl)-AMP + GDP + phosphate + 2 H(+). It participates in purine metabolism; AMP biosynthesis via de novo pathway; AMP from IMP: step 1/2. Its function is as follows. Plays an important role in the salvage pathway for purine nucleotide biosynthesis. Catalyzes the first committed step in the biosynthesis of AMP from IMP. In Trypanosoma cruzi (strain CL Brener), this protein is Adenylosuccinate synthetase 1.